Reading from the N-terminus, the 323-residue chain is NADH-ubiquinone oxidoreductase chain 1 (323 aa).

Helical transmembrane passes span 8–28 (LLNP…LTLI), 74–94 (LLFI…WLPL), 105–125 (LGML…LGSG), 150–170 (SLGL…LTTF), 176–196 (TIWL…STLA), 227–247 (LFFL…TILF), 258–278 (ELTS…FLWV), and 298–318 (FLPI…FTGS).

The protein belongs to the complex I subunit 1 family.

It localises to the mitochondrion inner membrane. The catalysed reaction is a ubiquinone + NADH + 5 H(+)(in) = a ubiquinol + NAD(+) + 4 H(+)(out). Its function is as follows. Core subunit of the mitochondrial membrane respiratory chain NADH dehydrogenase (Complex I) that is believed to belong to the minimal assembly required for catalysis. Complex I functions in the transfer of electrons from NADH to the respiratory chain. The immediate electron acceptor for the enzyme is believed to be ubiquinone. This Latimeria chalumnae (Coelacanth) protein is NADH-ubiquinone oxidoreductase chain 1 (MT-ND1).